A 60-amino-acid chain; its full sequence is Pepsin-3 (60 aa).

A propeptide spans 1–35 (INVPLTRHKSMRESLREKGIELPYQDPAIKYRPEF) (activation peptide).

Belongs to the peptidase A1 family.

This Thunnus orientalis (North Pacific bluefin tuna) protein is Pepsin-3.